The primary structure comprises 421 residues: Elsinochrome C biosynthesis regulatory protein elcR (421 aa).

Positions 1-16 are enriched in polar residues; sequence MATQLPSPTATTSHSG. The segment at 1 to 20 is disordered; the sequence is MATQLPSPTATTSHSGNEPR. Residues 27 to 54 constitute a DNA-binding region (zn(2)-C6 fungal-type); sequence CNNCSAQKIRCGKQRPACARCVNKKLQC.

Its subcellular location is the nucleus. Its function is as follows. Transcription regulator of the gene cluster that mediates the biosynthesis of elsinochrome C, a perelyenequinone phytotoxin structurally similar to cercosporin. The chain is Elsinochrome C biosynthesis regulatory protein elcR from Phaeosphaeria nodorum (strain SN15 / ATCC MYA-4574 / FGSC 10173) (Glume blotch fungus).